Consider the following 202-residue polypeptide: Putative 5'(3')-deoxyribonucleotidase (202 aa).

Asp22 (nucleophile) is an active-site residue. Mg(2+) is bound by residues Asp22, Asp24, and Asp156. Asp24 acts as the Proton donor in catalysis.

This sequence belongs to the 5'(3')-deoxyribonucleotidase family. Requires Mg(2+) as cofactor.

In terms of biological role, dephosphorylates the 5' and 2'(3')-phosphates of deoxyribonucleotides. This chain is Putative 5'(3')-deoxyribonucleotidase, found in Chlorobaculum tepidum (strain ATCC 49652 / DSM 12025 / NBRC 103806 / TLS) (Chlorobium tepidum).